The sequence spans 95 residues: Small ribosomal subunit protein uS19 (95 aa).

A disordered region spans residues 75–95 (APTRSFRGHGGKKADKRGKMK). Positions 80–95 (FRGHGGKKADKRGKMK) are enriched in basic residues.

It belongs to the universal ribosomal protein uS19 family.

Protein S19 forms a complex with S13 that binds strongly to the 16S ribosomal RNA. The polypeptide is Small ribosomal subunit protein uS19 (Roseiflexus sp. (strain RS-1)).